We begin with the raw amino-acid sequence, 229 residues long: Peptidase E (229 aa).

Active-site charge relay system residues include Ser120, Asp135, and His157.

Belongs to the peptidase S51 family.

The protein localises to the cytoplasm. The catalysed reaction is Dipeptidase E catalyzes the hydrolysis of dipeptides Asp-|-Xaa. It does not act on peptides with N-terminal Glu, Asn or Gln, nor does it cleave isoaspartyl peptides.. Its function is as follows. Hydrolyzes dipeptides containing N-terminal aspartate residues. May play a role in allowing the cell to use peptide aspartate to spare carbon otherwise required for the synthesis of the aspartate family of amino acids. The chain is Peptidase E from Salmonella typhi.